A 46-amino-acid polypeptide reads, in one-letter code: MMFEFNMAELLRHRWGRLRLYRFPGSVLTDYRILKNYAKTLTGAGV.

The protein to equivalent protein in phage 82.

This is an uncharacterized protein from Escherichia coli (strain K12).